A 248-amino-acid chain; its full sequence is Anamorsin homolog (248 aa).

An N-terminal SAM-like domain region spans residues 4–130 (FKGLQKSLYI…ETGSSARLSF (127 aa)). Residues 131-161 (AKKSPSMNVWKISGDDEELIDEEELLDEEDK) are linker. Cys172, Cys181, Cys184, and Cys186 together coordinate [2Fe-2S] cluster. Positions 172–186 (CSTTGKRKACKNCSC) are fe-S binding site A. Cys209, Cys212, Cys220, and Cys223 together coordinate [4Fe-4S] cluster. 2 short sequence motifs (cx2C motif) span residues 209–212 (CGNC) and 220–223 (CSTC). Residues 209–223 (CGNCYLGDAFRCSTC) are fe-S binding site B.

It belongs to the anamorsin family. As to quaternary structure, monomer. Requires [2Fe-2S] cluster as cofactor. [4Fe-4S] cluster serves as cofactor.

It localises to the cytoplasm. The protein localises to the mitochondrion intermembrane space. In terms of biological role, component of the cytosolic iron-sulfur (Fe-S) protein assembly (CIA) machinery. Required for the maturation of extramitochondrial Fe-S proteins. Part of an electron transfer chain functioning in an early step of cytosolic Fe-S biogenesis, facilitating the de novo assembly of a [4Fe-4S] cluster on the cytosolic Fe-S scaffold complex. Electrons are transferred from NADPH via a FAD- and FMN-containing diflavin oxidoreductase. Together with the diflavin oxidoreductase, also required for the assembly of the diferric tyrosyl radical cofactor of ribonucleotide reductase (RNR), probably by providing electrons for reduction during radical cofactor maturation in the catalytic small subunit. This Drosophila mojavensis (Fruit fly) protein is Anamorsin homolog.